Here is a 407-residue protein sequence, read N- to C-terminus: (R)-phenyllactyl-CoA dehydratase alpha subunit (407 aa).

A propeptide spanning residues 1–4 (MSDR) is cleaved from the precursor.

Belongs to the FldB/FldC dehydratase alpha/beta subunit family. In terms of assembly, part of the heterotrimeric phenyllactate dehydratase complex FldABC, composed of (R)-phenyllactate CoA-transferase (FldA) and a heterodimeric (R)-phenyllactyl-CoA dehydratase (FldB and FldC). It depends on [4Fe-4S] cluster as a cofactor. Requires No flavin could be detected in the FldABC complex, and the addition of FAD, FMN or riboflavin to the dehydratase do not increase enzymatic activity. as cofactor.

The catalysed reaction is (R)-3-phenyllactoyl-CoA = (E)-cinnamoyl-CoA + H2O. The enzyme catalyses (R)-3-(4-hydroxyphenyl)lactoyl-CoA = (E)-4-coumaroyl-CoA + H2O. It carries out the reaction (R)-3-(indol-3-yl)lactoyl-CoA = (E)-3-(indol-3-yl)acryloyl-CoA + H2O. It functions in the pathway amino-acid degradation; L-phenylalanine degradation. Functionally, component of the phenyllactate dehydratase complex FldABC that is involved in the fermentation of L-phenylalanine via a Stickland reaction. This complex catalyzes the reversible syn-dehydration of (R)-phenyllactate to (E)-cinnamate in two steps, a CoA-transfer from cinnamoyl-CoA to phenyllactate, catalyzed by FldA, followed by the dehydration of phenyllactyl-CoA to cinnamoyl-CoA, catalyzed by FldB and FldC. Requires the activator FldI to initiate catalysis. This chain is (R)-phenyllactyl-CoA dehydratase alpha subunit, found in Clostridium sporogenes.